We begin with the raw amino-acid sequence, 184 residues long: Peptide methionine sulfoxide reductase (184 aa).

Phosphoserine is present on serine 58.

This sequence belongs to the MsrA Met sulfoxide reductase family.

The catalysed reaction is L-methionyl-[protein] + [thioredoxin]-disulfide + H2O = L-methionyl-(S)-S-oxide-[protein] + [thioredoxin]-dithiol. It catalyses the reaction [thioredoxin]-disulfide + L-methionine + H2O = L-methionine (S)-S-oxide + [thioredoxin]-dithiol. Functionally, has an important function as a repair enzyme for proteins that have been inactivated by oxidation. Catalyzes the reversible oxidation-reduction of methionine sulfoxide in proteins to methionine. Also able to reduce dimethyl sulfoxide (DMSO) as well, with DMS as the product. This is Peptide methionine sulfoxide reductase (MXR1) from Saccharomyces cerevisiae (strain ATCC 204508 / S288c) (Baker's yeast).